Here is a 92-residue protein sequence, read N- to C-terminus: Small ribosomal subunit protein uS19 (92 aa).

It belongs to the universal ribosomal protein uS19 family.

Its function is as follows. Protein S19 forms a complex with S13 that binds strongly to the 16S ribosomal RNA. This is Small ribosomal subunit protein uS19 from Bartonella quintana (strain Toulouse) (Rochalimaea quintana).